The primary structure comprises 275 residues: NH(3)-dependent NAD(+) synthetase (275 aa).

50–57 (GISGGVDS) serves as a coordination point for ATP. Asp56 is a Mg(2+) binding site. Arg147 lines the deamido-NAD(+) pocket. Thr167 contributes to the ATP binding site. Residue Glu172 participates in Mg(2+) binding. 2 residues coordinate deamido-NAD(+): Lys180 and Asp187. ATP is bound by residues Lys196 and Thr218. 267–268 (HK) is a binding site for deamido-NAD(+).

The protein belongs to the NAD synthetase family. In terms of assembly, homodimer.

The catalysed reaction is deamido-NAD(+) + NH4(+) + ATP = AMP + diphosphate + NAD(+) + H(+). It participates in cofactor biosynthesis; NAD(+) biosynthesis; NAD(+) from deamido-NAD(+) (ammonia route): step 1/1. In terms of biological role, catalyzes the ATP-dependent amidation of deamido-NAD to form NAD. Uses ammonia as a nitrogen source. The protein is NH(3)-dependent NAD(+) synthetase of Pseudomonas syringae pv. syringae (strain B728a).